We begin with the raw amino-acid sequence, 185 residues long: Elongation factor P (185 aa).

This sequence belongs to the elongation factor P family.

It is found in the cytoplasm. The protein operates within protein biosynthesis; polypeptide chain elongation. Its function is as follows. Involved in peptide bond synthesis. Stimulates efficient translation and peptide-bond synthesis on native or reconstituted 70S ribosomes in vitro. Probably functions indirectly by altering the affinity of the ribosome for aminoacyl-tRNA, thus increasing their reactivity as acceptors for peptidyl transferase. The sequence is that of Elongation factor P from Streptococcus pyogenes serotype M5 (strain Manfredo).